A 339-amino-acid chain; its full sequence is MSYTAASQVVARQLAFFEGRKVLIAGELSDAYPVELANVAQSVAVFTTNFGYHNSMSRHDNIDCHFGVQLDAKLDIDMLLIYWPKAKAEADYLMSMLLAKFGPETEICIVGENRSGVRSAEKMFQPYGPLTKYDSARRCSFYWGRCDNEVKPFDLNDWFKSYPINVSGVELTVRSLPGVFSHGEFDNGSKLLINTLPSLRGKVLDFGCGAGVLGAIMKAKHPRIELELCDISALAIESAKETFKVNQLDAKFTATDVYSELKGPYNYLISNPPFHAGLKTFYTATENFIAQAPNYLFSDGQLIIVANSFLKYPELIEQSLETCNALANTNKFTIYSAKK.

It belongs to the methyltransferase superfamily. RsmC family. Monomer.

The protein localises to the cytoplasm. The catalysed reaction is guanosine(1207) in 16S rRNA + S-adenosyl-L-methionine = N(2)-methylguanosine(1207) in 16S rRNA + S-adenosyl-L-homocysteine + H(+). Specifically methylates the guanine in position 1207 of 16S rRNA in the 30S particle. The sequence is that of Ribosomal RNA small subunit methyltransferase C from Photobacterium profundum (strain SS9).